We begin with the raw amino-acid sequence, 139 residues long: Cuticle protein 76 (139 aa).

Repeat copies occupy residues 7-10 (AAPA), 68-71 (AAPA), 75-78 (AAPV), 93-95 (AAP), 105-108 (AAPA), and 121-124 (AAPA).

Functionally, component of the cuticle of migratory locust which contains more than 100 different structural proteins. In Locusta migratoria (Migratory locust), this protein is Cuticle protein 76.